A 310-amino-acid polypeptide reads, in one-letter code: N-acetyl-gamma-glutamyl-phosphate reductase (310 aa).

Cys-117 is a catalytic residue.

It belongs to the NAGSA dehydrogenase family. Type 2 subfamily.

It is found in the cytoplasm. The catalysed reaction is N-acetyl-L-glutamate 5-semialdehyde + phosphate + NADP(+) = N-acetyl-L-glutamyl 5-phosphate + NADPH + H(+). Its pathway is amino-acid biosynthesis; L-arginine biosynthesis; N(2)-acetyl-L-ornithine from L-glutamate: step 3/4. Functionally, catalyzes the NADPH-dependent reduction of N-acetyl-5-glutamyl phosphate to yield N-acetyl-L-glutamate 5-semialdehyde. The polypeptide is N-acetyl-gamma-glutamyl-phosphate reductase (Rhizobium meliloti (strain 1021) (Ensifer meliloti)).